Reading from the N-terminus, the 207-residue chain is Ribosomal RNA small subunit methyltransferase G (207 aa).

S-adenosyl-L-methionine is bound by residues glycine 73, leucine 78, 124–125 (VE), and arginine 139.

It belongs to the methyltransferase superfamily. RNA methyltransferase RsmG family.

Its subcellular location is the cytoplasm. It carries out the reaction guanosine(527) in 16S rRNA + S-adenosyl-L-methionine = N(7)-methylguanosine(527) in 16S rRNA + S-adenosyl-L-homocysteine. Functionally, specifically methylates the N7 position of guanine in position 527 of 16S rRNA. The polypeptide is Ribosomal RNA small subunit methyltransferase G (Klebsiella pneumoniae (strain 342)).